We begin with the raw amino-acid sequence, 61 residues long: Metallothionein-1E (61 aa).

Position 1 is an N-acetylmethionine (Met-1). The segment at 1–29 is beta; that stretch reads MDPNCSCPTGGSCSCAGSCTCKACRCTSC. A divalent metal cation contacts are provided by Cys-5, Cys-7, Cys-13, Cys-15, Cys-19, Cys-21, Cys-24, Cys-26, Cys-29, Cys-33, Cys-34, Cys-36, Cys-37, Cys-41, Cys-44, Cys-48, Cys-50, Cys-57, Cys-59, and Cys-60. Residues 30–61 form an alpha region; sequence KKSCCSCCPVGCAKCAQGCICKGASDKCSCCA.

The protein belongs to the metallothionein superfamily. Type 1 family. Monomer.

In terms of biological role, metallothioneins have a high content of cysteine residues that bind various heavy metals; these proteins are transcriptionally regulated by both heavy metals and glucocorticoids. This Sus scrofa (Pig) protein is Metallothionein-1E (MT1E).